A 557-amino-acid polypeptide reads, in one-letter code: Phosphoribosylaminoimidazole carboxylase, chloroplastic (557 aa).

The region spanning 108-293 (KVALLPAWIP…QFEQHLPAVV (186 aa)) is the ATP-grasp domain. An ATP-binding site is contributed by 132-189 (WDSLDIHFMIKSRRLAYDGRGNFVAKSEEELSSAVDALGGFDRGLYAEKWAPFVKELA). The interval 387 to 557 (CSTLLGFIMG…HGWESYLKNS (171 aa)) is AIR carboxylase catalytic subunit.

In the C-terminal section; belongs to the AIR carboxylase family. Class I subfamily.

The protein resides in the plastid. Its subcellular location is the chloroplast. The enzyme catalyses 5-amino-1-(5-phospho-D-ribosyl)imidazole-4-carboxylate + H(+) = 5-amino-1-(5-phospho-beta-D-ribosyl)imidazole + CO2. It participates in purine metabolism; IMP biosynthesis via de novo pathway; 5-amino-1-(5-phospho-D-ribosyl)imidazole-4-carboxylate from 5-amino-1-(5-phospho-D-ribosyl)imidazole (carboxylase route): step 1/1. This chain is Phosphoribosylaminoimidazole carboxylase, chloroplastic (PURKE), found in Vigna aconitifolia (Moth bean).